Consider the following 449-residue polypeptide: UDP-N-acetylmuramoylalanine--D-glutamate ligase (449 aa).

107 to 113 (GSNGKST) is a binding site for ATP.

This sequence belongs to the MurCDEF family.

It is found in the cytoplasm. The catalysed reaction is UDP-N-acetyl-alpha-D-muramoyl-L-alanine + D-glutamate + ATP = UDP-N-acetyl-alpha-D-muramoyl-L-alanyl-D-glutamate + ADP + phosphate + H(+). Its pathway is cell wall biogenesis; peptidoglycan biosynthesis. In terms of biological role, cell wall formation. Catalyzes the addition of glutamate to the nucleotide precursor UDP-N-acetylmuramoyl-L-alanine (UMA). The protein is UDP-N-acetylmuramoylalanine--D-glutamate ligase of Hydrogenovibrio crunogenus (strain DSM 25203 / XCL-2) (Thiomicrospira crunogena).